The sequence spans 262 residues: MNESTRNWPEELLELLGQTELTVNKIGYSGDHVYHVKEYRGTPAFLKIAPSVWWRTLRPEIEALAWLDGKLPVPKILYTAEHGGMDYLLMEALGGKDGSHETIQAKRKLFVKLYAEGLRSVHGLDIRECPLSNGLEKKLRDAKRIVDESLVDPADIKEEYDCTPEELYGLLLESKPVTEDLVFAHGDYCAPNLIIDGEKLSGFIDLGRAGVADRYQDISLAIRSLRHDYGDDRYKALFLELYGLDGLDEDKVRYYIRLDEFF.

Residue Asp-187 is the Proton acceptor of the active site.

This sequence belongs to the aminoglycoside phosphotransferase family. Monomer.

The protein resides in the cytoplasm. It carries out the reaction kanamycin A + ATP = kanamycin 3'-phosphate + ADP + H(+). In terms of biological role, resistance to butirosin and structurally-related aminoglycosides, including kanamycin and amikacin. The chain is Aminoglycoside 3'-phosphotransferase from Niallia circulans (Bacillus circulans).